A 398-amino-acid polypeptide reads, in one-letter code: MNYNKKSIEDIDVKSKKVLVRCDFNVPLNEGKITDENRLVGALPTVKYLMEKGAKIILCSHMGKPKGEPKKELSLLPVAKRLSEMLNKEVVFADDDNVVGENAKKAVEDMKDGDIVLLQNTRYRKEETKNEEIFSKELASLADVFVNDAFGTAHRAHCSTVGVTHYLKEAACGYLIQKELKFLGNAVETPERPFVAILGGAKVSDKINVINNLLDKVDTLIIGGGMGYTFLKSLGYTVGDSLLEEDKVEYAKEMINKAKEKGVNFLLPVDITIADRFDKDAEPIVTEDQNVKEGYMGLDIGSKTAKIYADAIKSAKTVIWNGPMGVFEFKNFANGTIEVAKAMADSDAVTIIGGGDSAAAVNIFGFGDKMSHISTGGGASLEFLEGKELPGIAALNDK.

Residues 23–25 (DFN), R38, 61–64 (HMGK), R122, and R155 contribute to the substrate site. ATP contacts are provided by residues K206, G297, E328, and 354–357 (GGDS).

It belongs to the phosphoglycerate kinase family. As to quaternary structure, monomer.

The protein resides in the cytoplasm. It carries out the reaction (2R)-3-phosphoglycerate + ATP = (2R)-3-phospho-glyceroyl phosphate + ADP. The protein operates within carbohydrate degradation; glycolysis; pyruvate from D-glyceraldehyde 3-phosphate: step 2/5. The chain is Phosphoglycerate kinase from Clostridium botulinum (strain Loch Maree / Type A3).